The chain runs to 543 residues: MPDISLSIPRRRLPRLRPLAAAVLGAVLLHGQAWAAQPVEKPQPVPAQAGNEPGLTQGLKETGNYTVTTAPAEPLHLDPPKLPDLSGYTAAAVEAKIVRKPGGRASVQRMVQQQPLKEFTGGSNRLAEWVKRQRQMPQAIFIEGGYVNLAQLAGKLPASALEQVEPGVFVARLPIVVSQGATLDIDKQVKELRLSQERGAFLVNDGMLFVRDSKVTGWSESKKEPAWFKTPNEFRPFLISWGGAEVYLSNSTFTSFGYNASKAYGISISQYSPGMDKQMKRPRPKGWVIDSTIVDSWYGFYCYEADDLVVKGNTYRDNIVYGIDPHDRSHRLIIADNTVHGTRKKHGIIVSREVNDSFIFNNRSYENKLSGIVLDRNSEGNLVAYNEVYRNHSDGITLYESGDNLLWGNQVLANRRHGIRVRNSVNIRLYENLAAGNQLIGVYGHIKDLTNTDRNIALDPFDTKVSLIVVGGKLAGNGSGPLSVDSPLSLELYRVAMLAPTKSSGISLPGVLGEKQDQILDLLVRQDKAVLIDPVESQAELQD.

Positions 1–35 are cleaved as a signal peptide; that stretch reads MPDISLSIPRRRLPRLRPLAAAVLGAVLLHGQAWA. 7 PbH1 repeats span residues 243-270, 283-304, 305-327, 329-352, 354-376, 378-400, and 401-423; these read GAEVYLSNSTFTSFGYNASKAYGISISQ, RPKGWVIDSTIVDSWYGFYCYE, ADDLVVKGNTYRDNIVYGIDPHD, SHRLIIADNTVHGTRKKHGIIVSR, VNDSFIFNNRSYENKLSGIVLDR, SEGNLVAYNEVYRNHSDGITLYE, and SGDNLLWGNQVLANRRHGIRVRN. His-326 functions as the Proton acceptor in the catalytic mechanism.

This sequence belongs to the D-mannuronate C5-epimerase family.

It is found in the periplasm. The catalysed reaction is [(1-&gt;4)-beta-D-mannuronosyl](n) = [alginate](n). Its pathway is glycan biosynthesis; alginate biosynthesis. Its activity is regulated as follows. Inhibited by the presence of acetyl groups on the substrate. Functionally, catalyzes the epimerization of beta-D-mannuronate to alpha-L-guluronate during the synthesis of the linear polysaccharide alginate. In addition, is part of a periplasmic protein complex that protects alginate from degradation by AlgL by channeling the newly formed alginate polymer through a scaffold that transfers the alginate polymer through the periplasmic space to the outer membrane secretin AlgE. This Pseudomonas aeruginosa (strain ATCC 15692 / DSM 22644 / CIP 104116 / JCM 14847 / LMG 12228 / 1C / PRS 101 / PAO1) protein is Mannuronan C5-epimerase.